The following is a 549-amino-acid chain: Undecaprenyl phosphate-alpha-4-amino-4-deoxy-L-arabinose arabinosyl transferase (549 aa).

A run of 12 helical transmembrane segments spans residues 9 to 29, 80 to 100, 112 to 132, 133 to 153, 176 to 196, 204 to 224, 256 to 276, 288 to 308, 312 to 332, 346 to 366, 376 to 396, and 402 to 422; these read LLLI…GLWI, LFGV…LAYL, SLAC…SGYA, NLDP…WHAL, FLTK…PYML, LLGY…PWAL, PWWF…GLLP, QAPV…FSLS, LPTY…HALV, NGLL…YLQL, FELF…LAQW, and AWAA…AAMP.

Belongs to the glycosyltransferase 83 family.

The protein resides in the cell inner membrane. The catalysed reaction is 4-amino-4-deoxy-alpha-L-arabinopyranosyl di-trans,octa-cis-undecaprenyl phosphate + lipid IVA = lipid IIA + di-trans,octa-cis-undecaprenyl phosphate.. The protein operates within lipopolysaccharide metabolism; 4-amino-4-deoxy-beta-L-arabinose-lipid A biosynthesis. Its function is as follows. Catalyzes the transfer of the L-Ara4N moiety of the glycolipid undecaprenyl phosphate-alpha-L-Ara4N to lipid A. The modified arabinose is attached to lipid A and is required for resistance to polymyxin and cationic antimicrobial peptides. The sequence is that of Undecaprenyl phosphate-alpha-4-amino-4-deoxy-L-arabinose arabinosyl transferase from Pseudomonas aeruginosa (strain LESB58).